The following is a 122-amino-acid chain: Large ribosomal subunit protein uL18 (122 aa).

The tract at residues 1–24 (MSTLSRKQQTQKRHRRLRRHLSGT) is disordered. The segment covering 9 to 21 (QTQKRHRRLRRHL) has biased composition (basic residues).

Belongs to the universal ribosomal protein uL18 family. As to quaternary structure, part of the 50S ribosomal subunit; part of the 5S rRNA/L5/L18/L25 subcomplex. Contacts the 5S and 23S rRNAs.

This is one of the proteins that bind and probably mediate the attachment of the 5S RNA into the large ribosomal subunit, where it forms part of the central protuberance. This is Large ribosomal subunit protein uL18 from Synechococcus sp. (strain WH7803).